The following is a 480-amino-acid chain: ATP synthase subunit beta, chloroplastic (480 aa).

161–168 (GGAGVGKT) contacts ATP.

It belongs to the ATPase alpha/beta chains family. F-type ATPases have 2 components, CF(1) - the catalytic core - and CF(0) - the membrane proton channel. CF(1) has five subunits: alpha(3), beta(3), gamma(1), delta(1), epsilon(1). CF(0) has four main subunits: a(1), b(1), b'(1) and c(9-12).

Its subcellular location is the plastid. The protein localises to the chloroplast thylakoid membrane. It carries out the reaction ATP + H2O + 4 H(+)(in) = ADP + phosphate + 5 H(+)(out). Produces ATP from ADP in the presence of a proton gradient across the membrane. The catalytic sites are hosted primarily by the beta subunits. The protein is ATP synthase subunit beta, chloroplastic of Euglena gracilis.